The sequence spans 647 residues: Epithelial sodium channel subunit beta (647 aa).

At 1-57 the chain is on the cytoplasmic side; the sequence is MIHGKMKRLKRYFTRALHRIQKGPGYTYKELLVWFCDNTNTHGPKRIIKEGPKKRVM. A helical transmembrane segment spans residues 58–78; the sequence is WFILTLVFAGLVFWQWGVLIL. At 79–552 the chain is on the extracellular side; the sequence is TYLSYGVSVS…GGQFGFWMGG (474 aa). Disulfide bonds link C104/C291, C215/C222, C268/C275, C381/C468, C406/C464, C410/C460, C419/C446, and C421/C435. The helical transmembrane segment at 553–573 threads the bilayer; it reads SVLCIIEFGEIIIDCMWITIL. The Cytoplasmic portion of the chain corresponds to 574 to 647; the sequence is KFLAWSRNRR…AEPVSSDEEN (74 aa). A disordered region spans residues 586-647; sequence RKRPQYSDPP…AEPVSSDEEN (62 aa).

This sequence belongs to the amiloride-sensitive sodium channel (TC 1.A.6) family. SCNN1B subfamily. As to quaternary structure, component of the heterotrimeric epithelial sodium channel (ENaC) composed of an alpha/SCNN1A, a beta/SCNN1B and a gamma/SCNN1G subunit.

The protein localises to the apical cell membrane. The protein resides in the cytoplasmic vesicle membrane. The catalysed reaction is Na(+)(in) = Na(+)(out). Its activity is regulated as follows. Originally identified and characterized by its inhibition by the diuretic drug amiloride. This is one of the three pore-forming subunits of the heterotrimeric epithelial sodium channel (ENaC), a critical regulator of sodium balance and fluid homeostasis. ENaC operates in epithelial tissues, where it mediates the electrodiffusion of sodium ions from extracellular fluid through the apical membrane of cells, with water following osmotically. This Xenopus laevis (African clawed frog) protein is Epithelial sodium channel subunit beta (scnn1b-a).